Consider the following 156-residue polypeptide: Cellulose synthase operon protein D (156 aa).

The protein operates within glycan metabolism; bacterial cellulose biosynthesis. In terms of biological role, may have a major role in the perfection of crystallization, involved either in the pore structure itself or in the organization of the pores within the linear array of terminal synthesizing complexes (TCs). The sequence is that of Cellulose synthase operon protein D from Komagataeibacter xylinus (Gluconacetobacter xylinus).